Reading from the N-terminus, the 552-residue chain is MRTPYCVADYLLDRLTDCGADHLFGVPGDYNLQFLDHVIDSPDICWVGCANELNASYAADGYARCKGFAALLTTFGVGELSAMNGIAGSYAEHVPVLHIVGAPGTAAQQRGELLHHTLGDGEFRHFYHMSEPITVAQAVLTEQNACYEIDRVLTTMLRERRPGYLMLPADVAKKAATPPVNALTHKQAHADSACLKAFRDAAENKLAMSKRTALLADFLVLRHGLKHALQKWVKEVPMAHATMLMGKGIFDERQAGFYGTYSGSASTGAVKEAIEGADTVLCVGTRFTDTLTAGFTHQLTPAQTIEVQPHAARVGDVWFTGIPMNQAIETLVELCKQHVHAGLMSSSSGAIPFPQPDGSLTQENFWRTLQTFIRPGDIILADQGTSAFGAIDLRLPADVNFIVQPLWGSIGYTLAAAFGAQTACPNRRVIVLTGDGAAQLTIQELGSMLRDKQHPIILVLNNEGYTVERAIHGAEQRYNDIALWNWTHIPQALSLDPQSECWRVSEAEQLADVLEKVAHHERLSLIEVMLPKADIPPLLGALTKALEACNNA.

Glu-52 is a thiamine diphosphate binding site. The thiamine pyrophosphate binding stretch occupies residues 385 to 466; sequence TSAFGAIDLR…ILVLNNEGYT (82 aa). The Mg(2+) site is built by Asp-435 and Asn-462.

It belongs to the TPP enzyme family. Homotetramer. A metal cation serves as cofactor. The cofactor is thiamine diphosphate.

It carries out the reaction indole-3-pyruvate + H(+) = indole-3-acetaldehyde + CO2. Its pathway is plant hormone metabolism; auxin biosynthesis. This is Indole-3-pyruvate decarboxylase (ipdC) from Enterobacter cloacae.